The sequence spans 613 residues: Probable inactive purple acid phosphatase 1 (613 aa).

Positions 1 to 24 are cleaved as a signal peptide; it reads MRESLVAILVTVISVLGAIHQVKS. N-linked (GlcNAc...) asparagine glycosylation is found at N89 and N116. A Fe cation-binding site is contributed by D295. A glycan (N-linked (GlcNAc...) asparagine) is linked at N316. 2 residues coordinate Fe cation: D336 and Y339. D336 lines the Zn(2+) pocket. N369, H458, and H500 together coordinate Zn(2+). Residue N369 participates in substrate binding. 500-502 is a binding site for substrate; it reads HAH. H502 provides a ligand contact to Fe cation. N-linked (GlcNAc...) asparagine glycosylation is found at N528 and N551.

Belongs to the metallophosphoesterase superfamily. Purple acid phosphatase family. In terms of assembly, homodimer. It depends on Fe cation as a cofactor. Zn(2+) is required as a cofactor. As to expression, expressed in roots, stems, leaves, flowers and siliques.

The protein localises to the secreted. The polypeptide is Probable inactive purple acid phosphatase 1 (PAP1) (Arabidopsis thaliana (Mouse-ear cress)).